The sequence spans 1479 residues: Chromosome partition protein MukB (1479 aa).

An ATP-binding site is contributed by 34 to 41; the sequence is GGNGAGKS. Coiled coils occupy residues 337 to 418, 511 to 604, 780 to 810, 847 to 1116, and 1206 to 1265; these read LNLV…QYQQ, QAER…APVW, RAAR…DVQK, ELDR…AKAG, and DDPV…LQAV. Residues 666 to 783 form a flexible hinge region; the sequence is PGGSEDPRLN…EVPLFGRAAR (118 aa).

It belongs to the SMC family. MukB subfamily. Homodimerization via its hinge domain. Binds to DNA via its C-terminal region. Interacts, and probably forms a ternary complex, with MukE and MukF via its C-terminal region. The complex formation is stimulated by calcium or magnesium. Interacts with tubulin-related protein FtsZ.

The protein resides in the cytoplasm. It localises to the nucleoid. Functionally, plays a central role in chromosome condensation, segregation and cell cycle progression. Functions as a homodimer, which is essential for chromosome partition. Involved in negative DNA supercoiling in vivo, and by this means organize and compact chromosomes. May achieve or facilitate chromosome segregation by condensation DNA from both sides of a centrally located replisome during cell division. The polypeptide is Chromosome partition protein MukB (Pectobacterium atrosepticum (strain SCRI 1043 / ATCC BAA-672) (Erwinia carotovora subsp. atroseptica)).